The chain runs to 114 residues: Neurotrophic factor BDNF precursor form (114 aa).

3 disulfide bridges follow: Cys14–Cys81, Cys59–Cys110, and Cys69–Cys112.

Belongs to the NGF-beta family. In terms of assembly, monomers and homodimers. Binds to NTRK2/TRKB. Can form heterodimers with other neurotrophin family members, such as NTF3 and NTF4 (in vitro), but the physiological relevance of this is not clear. BDNF precursor form: interacts with the heterodimer formed by NGFR and SORCS2. Mature BDNF has much lower affinity for the heterodimer formed by NGFR and SORCS2. Post-translationally, N-glycosylated and glycosulfated, contrary to mature BDNF. In terms of processing, mature BDNF is produced by proteolytic removal of the propeptide, catalyzed by a FURIN family member. In addition, the precursor form is proteolytically cleaved within the propeptide, but this is not an obligatory intermediate for the production of mature BDNF. Can be converted into mature BDNF by plasmin (PLG).

The protein localises to the secreted. In terms of biological role, important signaling molecule that activates signaling cascades downstream of NTRK2. During development, promotes the survival and differentiation of selected neuronal populations of the peripheral and central nervous systems. Participates in axonal growth, pathfinding and in the modulation of dendritic growth and morphology. Major regulator of synaptic transmission and plasticity at adult synapses in many regions of the CNS. The versatility of BDNF is emphasized by its contribution to a range of adaptive neuronal responses including long-term potentiation (LTP), long-term depression (LTD), certain forms of short-term synaptic plasticity, as well as homeostatic regulation of intrinsic neuronal excitability. Functionally, important signaling molecule that activates signaling cascades downstream of NTRK2. Activates signaling cascades via the heterodimeric receptor formed by NGFR and SORCS2. Signaling via NGFR and SORCS2 plays a role in synaptic plasticity and long-term depression (LTD). Binding to NGFR and SORCS2 promotes neuronal apoptosis. Promotes neuronal growth cone collapse. This is Neurotrophic factor BDNF precursor form (BDNF) from Macaca mulatta (Rhesus macaque).